The chain runs to 342 residues: MSVMAAMGGAQVLSSTGAFADPAPDAVAQQWAIFRAKYLRPSGRVVDTGNGGESHSEGQGYGMLFAASAGDLASFQSMWMWARTNLQHTNDKLFSWRFLKGHQPPVPDKNNATDGDLLIALALGRAGKRFQRPDYIQDAMAIYGDVLNLMTMKAGPYVVLMPGAVGFTKKDSVILNLSYYVMPSLLQAFDLTADPRWRQVMEDGIRLVSAGRFGQWRLPPDWLAVNRATGALSIASGWPPRFSYDAIRVPLYFYWAHMLAPNVLADFTRFWNNFGANALPGWVDLTTGARSPYNAPPGYLAVAECTGLDSAGELPTLDHAPDYYSAALTLLVYIARAEETIK.

Residues 1–20 (MSVMAAMGGAQVLSSTGAFA) form the signal peptide. The active-site Proton donor is the Glu57. Asp114 serves as the catalytic Nucleophile.

The protein belongs to the glycosyl hydrolase 8 (cellulase D) family.

It is found in the secreted. It catalyses the reaction Endohydrolysis of (1-&gt;4)-beta-D-glucosidic linkages in cellulose, lichenin and cereal beta-D-glucans.. In terms of biological role, enzyme capable of hydrolyzing carboxy-methyl-cellulose (CMC). The sequence is that of Probable endoglucanase (cmcAX) from Novacetimonas hansenii (Komagataeibacter hansenii).